Consider the following 178-residue polypeptide: Large ribosomal subunit protein uL6 (178 aa).

It belongs to the universal ribosomal protein uL6 family. As to quaternary structure, part of the 50S ribosomal subunit.

Functionally, this protein binds to the 23S rRNA, and is important in its secondary structure. It is located near the subunit interface in the base of the L7/L12 stalk, and near the tRNA binding site of the peptidyltransferase center. The chain is Large ribosomal subunit protein uL6 from Campylobacter concisus (strain 13826).